Here is an 89-residue protein sequence, read N- to C-terminus: MSLHQERKSELVSKFRTHESDTGSPEVQVALLSERITMLTEHFKTHKKDHHSRRGLLKLVGQRRRLLDYLKSKDVARYKKLIDGLGIRK.

Positions 1 to 21 (MSLHQERKSELVSKFRTHESD) are enriched in basic and acidic residues. Residues 1–25 (MSLHQERKSELVSKFRTHESDTGSP) are disordered.

Belongs to the universal ribosomal protein uS15 family. In terms of assembly, part of the 30S ribosomal subunit. Forms a bridge to the 50S subunit in the 70S ribosome, contacting the 23S rRNA.

In terms of biological role, one of the primary rRNA binding proteins, it binds directly to 16S rRNA where it helps nucleate assembly of the platform of the 30S subunit by binding and bridging several RNA helices of the 16S rRNA. Forms an intersubunit bridge (bridge B4) with the 23S rRNA of the 50S subunit in the ribosome. This Myxococcus xanthus (strain DK1622) protein is Small ribosomal subunit protein uS15.